The chain runs to 477 residues: Protoporphyrinogen oxidase (477 aa).

Residues 9–14 (GGGISG), 34–35 (ES), Trp42, 57–60 (GPRG), Val257, Ala449, and 454–456 (VAV) each bind FAD.

Belongs to the protoporphyrinogen/coproporphyrinogen oxidase family. Protoporphyrinogen oxidase subfamily. In terms of assembly, monomer. Homodimer. The cofactor is FAD. Expressed in heart, brain, placenta, lung, liver, skeletal muscle, kidney and pancreas.

It localises to the mitochondrion inner membrane. The catalysed reaction is protoporphyrinogen IX + 3 O2 = protoporphyrin IX + 3 H2O2. Its pathway is porphyrin-containing compound metabolism; protoporphyrin-IX biosynthesis; protoporphyrin-IX from protoporphyrinogen-IX: step 1/1. Functionally, catalyzes the 6-electron oxidation of protoporphyrinogen-IX to form protoporphyrin-IX. This is Protoporphyrinogen oxidase (PPOX) from Homo sapiens (Human).